The chain runs to 102 residues: MKDMNSIRYVFFFFSRDIKSCFYKVRSYLNLLLILEAILCPVDSLISIPNGIMVVSEPDSPFSHSNPSRRLFRKVNPSSCLSVLYLDLCCSGLIIAEAGIGG.

The next 2 membrane-spanning stretches (helical) occupy residues 28–48 (YLNL…LISI) and 81–101 (LSVL…AGIG).

It is found in the membrane. This is an uncharacterized protein from Saccharomyces cerevisiae (strain ATCC 204508 / S288c) (Baker's yeast).